The primary structure comprises 198 residues: Zinc finger protein 41 homolog (198 aa).

Residues Met1 to Pro12 show a composition bias toward basic residues. Residues Met1–Glu55 are disordered. The span at Thr13 to Glu38 shows a compositional bias: basic and acidic residues. 4 consecutive C2H2-type zinc fingers follow at residues Tyr87–His109, Phe115–His137, Phe143–His165, and Tyr171–His193.

This sequence belongs to the krueppel C2H2-type zinc-finger protein family.

The protein resides in the nucleus. Functionally, a putative DNA-binding regulatory protein associated with meiosis in spermatogenesis. This chain is Zinc finger protein 41 homolog (ZFP41), found in Homo sapiens (Human).